Consider the following 494-residue polypeptide: MTIHVKNNIHWVGQRDWEVQDFHGTEYKMTKGTSYNSYLIREEKTVLIDTVDHRFSQQFIQNLQMEIDLQSIDFIVINHAEEDHSGALSALMEKIPNTPIYCTEAAIDSIVGHHHHPEWNFKTVKTGDSIDIGNGKQLVFVEAPMLHWPDSMMTYLTGDAVLFSNDAFGQHYCDERLFNDEVDQAELMEQCLRYYSNILTPFSALVTAKIQEVLSFNLPVDMIATSHGIVWRENPTQIIEQYLAWANNYQEDRITIFYDSMSNNTRMMADAIAQGIHDVDPSVAVKVFNVSKQDKNEILANVFRSKGILVGSSTMNNVMMPKIAGMLEEITGLRFKAKKAAAFGSYGWNGGAVDRIHARLTDAGFETAISLKTKWRPDGKAMRECREHGQQIAKLWAVKDKSTLSTPVNAFQSATPIEGIEAQQPLTETTPTADAAHSADCQCMVCTVCNWVYDPAKGEPNQGIEVGTTWADVPDYFLCPECHLGKDVFVEYQG.

The zinc metallo-hydrolase stretch occupies residues 30 to 210 (TKGTSYNSYL…PFSALVTAKI (181 aa)). Residues histidine 79, glutamate 81, aspartate 83, histidine 147, aspartate 166, and histidine 227 each contribute to the Fe cation site. The Flavodoxin-like domain occupies 254–393 (ITIFYDSMSN…ECREHGQQIA (140 aa)). FMN contacts are provided by residues 260-264 (SMSNN) and 342-369 (AFGS…ETAI). The Rubredoxin-like domain occupies 441-492 (CQCMVCTVCNWVYDPAKGEPNQGIEVGTTWADVPDYFLCPECHLGKDVFVEY). Cysteine 446, cysteine 449, cysteine 479, and cysteine 482 together coordinate Fe cation.

It in the N-terminal section; belongs to the zinc metallo-hydrolase group 3 family. As to quaternary structure, homotetramer. Fe cation is required as a cofactor. FMN serves as cofactor.

It is found in the cytoplasm. The protein operates within nitrogen metabolism; nitric oxide reduction. Its function is as follows. Anaerobic nitric oxide reductase; uses NADH to detoxify nitric oxide (NO), protecting several 4Fe-4S NO-sensitive enzymes. Has at least 2 reductase partners, only one of which (NorW, flavorubredoxin reductase) has been identified. NO probably binds to the di-iron center; electrons enter from the NorW at rubredoxin and are transferred sequentially to the FMN center and the di-iron center. Also able to function as an aerobic oxygen reductase. In Vibrio vulnificus (strain YJ016), this protein is Anaerobic nitric oxide reductase flavorubredoxin.